We begin with the raw amino-acid sequence, 217 residues long: Homeobox protein Hox-B7 (217 aa).

Positions 126 to 131 match the Antp-type hexapeptide motif; the sequence is IYPWMR. A DNA-binding region (homeobox) is located at residues 137–196; that stretch reads RKRGRQTYTRYQTLELEKEFHYNRYLTRRRRIEIAHTLCLTERQIKIWFQNRRMKWKKEN. Residues 192–217 are disordered; it reads WKKENKTSGPGTTGQDKAEAEEEEEE.

Belongs to the Antp homeobox family. In terms of assembly, forms a DNA-binding heterodimer with transcription factor PBX1.

The protein localises to the nucleus. In terms of biological role, sequence-specific transcription factor which is part of a developmental regulatory system that provides cells with specific positional identities on the anterior-posterior axis. This chain is Homeobox protein Hox-B7 (Hoxb7), found in Mus musculus (Mouse).